The primary structure comprises 712 residues: Ribosome-releasing factor 2, mitochondrial (712 aa).

The transit peptide at 1–29 directs the protein to the mitochondrion; the sequence is MLRCAWQNGPRQSNRWLRHLSNQIWKRSY. In terms of domain architecture, tr-type G spans 31–310; that stretch reads SKIRNIGILA…AVNSYLPAPE (280 aa). GTP contacts are provided by residues 40-47, 104-108, and 158-161; these read AHIDAGKT, DTPGH, and NKMD.

Belongs to the TRAFAC class translation factor GTPase superfamily. Classic translation factor GTPase family. EF-G/EF-2 subfamily.

The protein localises to the mitochondrion. Functionally, mitochondrial GTPase that mediates the disassembly of ribosomes from messenger RNA at the termination of mitochondrial protein biosynthesis. Not involved in the GTP-dependent ribosomal translocation step during translation elongation. The polypeptide is Ribosome-releasing factor 2, mitochondrial (Drosophila yakuba (Fruit fly)).